Consider the following 545-residue polypeptide: CTP synthase (545 aa).

Residues 1–266 (MATNYIFVTG…DTFVCDRFRL (266 aa)) are amidoligase domain. A CTP-binding site is contributed by Ser-14. UTP is bound at residue Ser-14. ATP-binding positions include 15–20 (SLGKGI) and Asp-72. Mg(2+) contacts are provided by Asp-72 and Glu-140. CTP contacts are provided by residues 147–149 (DIE), 187–192 (KTKPTQ), and Lys-223. UTP is bound by residues 187-192 (KTKPTQ) and Lys-223. Residue 239–241 (KDV) coordinates ATP. The region spanning 291–542 (TIGMVGKYVE…VKAAKDYQDS (252 aa)) is the Glutamine amidotransferase type-1 domain. Gly-352 lines the L-glutamine pocket. Cys-379 (nucleophile; for glutamine hydrolysis) is an active-site residue. L-glutamine is bound by residues 380-383 (LGMQ), Glu-403, and Arg-470. Residues His-515 and Glu-517 contribute to the active site.

Belongs to the CTP synthase family. In terms of assembly, homotetramer.

The enzyme catalyses UTP + L-glutamine + ATP + H2O = CTP + L-glutamate + ADP + phosphate + 2 H(+). It catalyses the reaction L-glutamine + H2O = L-glutamate + NH4(+). It carries out the reaction UTP + NH4(+) + ATP = CTP + ADP + phosphate + 2 H(+). It participates in pyrimidine metabolism; CTP biosynthesis via de novo pathway; CTP from UDP: step 2/2. With respect to regulation, allosterically activated by GTP, when glutamine is the substrate; GTP has no effect on the reaction when ammonia is the substrate. The allosteric effector GTP functions by stabilizing the protein conformation that binds the tetrahedral intermediate(s) formed during glutamine hydrolysis. Inhibited by the product CTP, via allosteric rather than competitive inhibition. In terms of biological role, catalyzes the ATP-dependent amination of UTP to CTP with either L-glutamine or ammonia as the source of nitrogen. Regulates intracellular CTP levels through interactions with the four ribonucleotide triphosphates. The protein is CTP synthase of Actinobacillus pleuropneumoniae serotype 7 (strain AP76).